Here is a 295-residue protein sequence, read N- to C-terminus: Transcriptional regulator SirC (295 aa).

Positions 195 to 292 constitute an HTH araC/xylS-type domain; it reads EKVYNIIISD…KITPLSFMRT (98 aa). 2 consecutive DNA-binding regions (H-T-H motif) follow at residues 212–233 and 259–282; these read AEVA…AAEE and ISQV…KRHF.

Functionally, positive regulator of the expression of the invasion-associated type III secretion system encoded within SPI-1 (pathogenicity island 1). The sequence is that of Transcriptional regulator SirC (sirC) from Salmonella typhi.